The chain runs to 541 residues: Membrane protein insertase YidC (541 aa).

A helical membrane pass occupies residues 6 to 26 (SLLVLALIFISFLVYQQWQLD). Residues 34–56 (EQTTSITATSDVPASSPSNSQAI) form a disordered region. 4 helical membrane passes run 337-357 (FWLL…IICV), 416-436 (LGGC…YWTF), 454-474 (LSAQ…MFLL), and 495-515 (PLVF…YWLV).

Belongs to the OXA1/ALB3/YidC family. Type 1 subfamily. In terms of assembly, interacts with the Sec translocase complex via SecD. Specifically interacts with transmembrane segments of nascent integral membrane proteins during membrane integration.

It localises to the cell inner membrane. Required for the insertion and/or proper folding and/or complex formation of integral membrane proteins into the membrane. Involved in integration of membrane proteins that insert both dependently and independently of the Sec translocase complex, as well as at least some lipoproteins. Aids folding of multispanning membrane proteins. In Haemophilus influenzae (strain 86-028NP), this protein is Membrane protein insertase YidC.